Consider the following 172-residue polypeptide: Transcriptional repressor NrdR (172 aa).

The segment at 3–34 (CPFCGAPDTRVIDSRLAGEGDQVRRRRECLSC) is a zinc-finger region. Residues 49–139 (PRVVKRDGSR…VYLSFADVQA (91 aa)) enclose the ATP-cone domain.

This sequence belongs to the NrdR family. Zn(2+) serves as cofactor.

In terms of biological role, negatively regulates transcription of bacterial ribonucleotide reductase nrd genes and operons by binding to NrdR-boxes. The sequence is that of Transcriptional repressor NrdR from Thioalkalivibrio sulfidiphilus (strain HL-EbGR7).